Reading from the N-terminus, the 223-residue chain is Small ribosomal subunit protein uS3 (223 aa).

The region spanning 39–108 (IRNFVKKNSY…NILINIVEVK (70 aa)) is the KH type-2 domain.

Belongs to the universal ribosomal protein uS3 family. Part of the 30S ribosomal subunit. Forms a tight complex with proteins S10 and S14.

Its function is as follows. Binds the lower part of the 30S subunit head. Binds mRNA in the 70S ribosome, positioning it for translation. The protein is Small ribosomal subunit protein uS3 of Clostridium botulinum (strain Okra / Type B1).